A 1149-amino-acid chain; its full sequence is Eukaryotic translation initiation factor 3 subunit A (1149 aa).

The region spanning 317–498 (IQRMTSHVLI…HSVHFGTDLS (182 aa)) is the PCI domain. 2 disordered regions span residues 496-515 (DLSE…QSMP) and 811-1149 (EEER…KHHR). Positions 811–885 (EEERRRIEEE…APRGEKEERG (75 aa)) are enriched in basic and acidic residues. The segment covering 886-895 (GGGGGGGAWR) has biased composition (gly residues). The segment covering 908–924 (AKPESDWRNAREAREPA) has biased composition (basic and acidic residues). Low complexity predominate over residues 925–937 (PESAGASSAAAPA). Basic and acidic residues-rich tracts occupy residues 961–970 (RPPRGDDREP), 1005–1095 (GPMR…DRRG), and 1113–1132 (EPAK…KEAR).

Belongs to the eIF-3 subunit A family. Component of the eukaryotic translation initiation factor 3 (eIF-3) complex.

The protein resides in the cytoplasm. Functionally, RNA-binding component of the eukaryotic translation initiation factor 3 (eIF-3) complex, which is involved in protein synthesis of a specialized repertoire of mRNAs and, together with other initiation factors, stimulates binding of mRNA and methionyl-tRNAi to the 40S ribosome. The eIF-3 complex specifically targets and initiates translation of a subset of mRNAs involved in cell proliferation. The sequence is that of Eukaryotic translation initiation factor 3 subunit A from Culex quinquefasciatus (Southern house mosquito).